The following is an 886-amino-acid chain: Alanine--tRNA ligase (886 aa).

The Zn(2+) site is built by His-564, His-568, Cys-666, and His-670.

The protein belongs to the class-II aminoacyl-tRNA synthetase family. It depends on Zn(2+) as a cofactor.

Its subcellular location is the cytoplasm. It catalyses the reaction tRNA(Ala) + L-alanine + ATP = L-alanyl-tRNA(Ala) + AMP + diphosphate. Catalyzes the attachment of alanine to tRNA(Ala) in a two-step reaction: alanine is first activated by ATP to form Ala-AMP and then transferred to the acceptor end of tRNA(Ala). Also edits incorrectly charged Ser-tRNA(Ala) and Gly-tRNA(Ala) via its editing domain. The polypeptide is Alanine--tRNA ligase (Prochlorococcus marinus (strain MIT 9301)).